The following is a 424-amino-acid chain: Serine--tRNA ligase (424 aa).

Position 230 to 232 (230 to 232 (TAE)) interacts with L-serine. ATP is bound at residue 261 to 263 (RAE). Residue Glu-284 participates in L-serine binding. 348-351 (EISS) contributes to the ATP binding site. Ser-384 contributes to the L-serine binding site.

Belongs to the class-II aminoacyl-tRNA synthetase family. Type-1 seryl-tRNA synthetase subfamily. Homodimer. The tRNA molecule binds across the dimer.

It localises to the cytoplasm. It carries out the reaction tRNA(Ser) + L-serine + ATP = L-seryl-tRNA(Ser) + AMP + diphosphate + H(+). The catalysed reaction is tRNA(Sec) + L-serine + ATP = L-seryl-tRNA(Sec) + AMP + diphosphate + H(+). Its pathway is aminoacyl-tRNA biosynthesis; selenocysteinyl-tRNA(Sec) biosynthesis; L-seryl-tRNA(Sec) from L-serine and tRNA(Sec): step 1/1. Functionally, catalyzes the attachment of serine to tRNA(Ser). Is also able to aminoacylate tRNA(Sec) with serine, to form the misacylated tRNA L-seryl-tRNA(Sec), which will be further converted into selenocysteinyl-tRNA(Sec). The sequence is that of Serine--tRNA ligase from Desulforamulus reducens (strain ATCC BAA-1160 / DSM 100696 / MI-1) (Desulfotomaculum reducens).